A 318-amino-acid chain; its full sequence is Small ribosomal subunit protein RACK1 (318 aa).

WD repeat units lie at residues 11–44, 65–95, 107–137, 150–182, 194–224, 235–264, and 282–315; these read GHRG…LSWG, GHSA…RLWN, GHTK…RVWN, AHTD…KVWD, GHTN…RLWD, AAGA…RIFD, and KKIV…WGVS.

Belongs to the WD repeat G protein beta family. Ribosomal protein RACK1 subfamily.

In Trypanosoma brucei brucei, this protein is Small ribosomal subunit protein RACK1.